The primary structure comprises 277 residues: Putative thiosulfate sulfurtransferase (277 aa).

Rhodanese domains follow at residues 18-125 (HAPK…PLSS) and 154-274 (AINV…APIE). The active-site Cysteine persulfide intermediate is the C233. Residue R238 coordinates substrate.

It carries out the reaction thiosulfate + hydrogen cyanide = thiocyanate + sulfite + 2 H(+). Functionally, may be a sulfotransferase involved in the formation of thiosulfate. The chain is Putative thiosulfate sulfurtransferase (cysA1) from Mycobacterium tuberculosis (strain CDC 1551 / Oshkosh).